The following is a 128-amino-acid chain: Protein ripply2 (128 aa).

Residues 1–63 (MENAGGAEGT…HAAEAMPDGP (63 aa)) are disordered. The span at 9–22 (GTESGAAACAATDG) shows a compositional bias: low complexity. The WRPW motif motif lies at 37–40 (WRPW). The segment at 77–112 (HPVRLFWPKSKCYDYLYQEAEALLKNFPIQATISFY) is ripply homology domain.

This sequence belongs to the ripply family.

It is found in the nucleus. Plays a role in somitogenesis. Required for somite segregation and establishment of rostrocaudal polarity in somites. In Homo sapiens (Human), this protein is Protein ripply2 (RIPPLY2).